Consider the following 283-residue polypeptide: Accumulation of dyads protein 2 (283 aa).

A disordered region spans residues 1–41 (MSDKEQTSGNTDLENAPAGYYSSHDNDVNGVAEDERPSHDS). Topologically, residues 1 to 89 (MSDKEQTSGN…APAPVHKFAN (89 aa)) are cytoplasmic. Residues 90 to 110 (PAPLGLSAFALTTFVLSMFNA) traverse the membrane as a helical segment. Residues 111–120 (RAQGITVPNV) are Extracellular-facing. The helical transmembrane segment at 121–141 (VVGCAMFYGGLVQLIAGIWEI) threads the bilayer. The Cytoplasmic portion of the chain corresponds to 142 to 151 (ALENTFGGTA). A helical transmembrane segment spans residues 152 to 172 (LCSYGGFWLSFAAIYIPWFGI). At 173-185 (LEAYEDNESDLNN) the chain is on the extracellular side. A helical transmembrane segment spans residues 186 to 206 (ALGFYLLGWAIFTFGLTVCTM). Residues 207–208 (KS) lie on the Cytoplasmic side of the membrane. The helical transmembrane segment at 209-229 (TVMFFLLFFLLALTFLLLSIG) threads the bilayer. Topologically, residues 230–240 (HFANRLGVTRA) are extracellular. A helical membrane pass occupies residues 241–261 (GGVLGVVVAFIAWYNAYAGVA). The Cytoplasmic portion of the chain corresponds to 262 to 283 (TKQNSYVLARPFPLPSTERVIF).

The protein belongs to the acetate uptake transporter (AceTr) (TC 2.A.96) family.

It is found in the cell membrane. The protein resides in the vacuole membrane. Its function is as follows. Transporter protein required for ammonia export and acetate uptake and resistance. Necessary for up-regulation and down-regulation of meiotic plaque (MP) component levels in a dependency on external acetate. Has a role in ascus formation. The chain is Accumulation of dyads protein 2 (ADY2) from Saccharomyces cerevisiae (strain ATCC 204508 / S288c) (Baker's yeast).